Here is a 162-residue protein sequence, read N- to C-terminus: Peptidyl-prolyl cis-trans isomerase-like 1 (162 aa).

The PPIase cyclophilin-type domain occupies 1 to 155 (MATDVTFDTS…DEVKILRAKV (155 aa)).

It belongs to the cyclophilin-type PPIase family. PPIL1 subfamily.

The catalysed reaction is [protein]-peptidylproline (omega=180) = [protein]-peptidylproline (omega=0). Functionally, PPIases accelerate the folding of proteins. It catalyzes the cis-trans isomerization of proline imidic peptide bonds in oligopeptides. The protein is Peptidyl-prolyl cis-trans isomerase-like 1 (cyp1) of Emericella nidulans (strain FGSC A4 / ATCC 38163 / CBS 112.46 / NRRL 194 / M139) (Aspergillus nidulans).